The following is an 80-amino-acid chain: Exodeoxyribonuclease 7 small subunit (80 aa).

The protein belongs to the XseB family. In terms of assembly, heterooligomer composed of large and small subunits.

It is found in the cytoplasm. The enzyme catalyses Exonucleolytic cleavage in either 5'- to 3'- or 3'- to 5'-direction to yield nucleoside 5'-phosphates.. Functionally, bidirectionally degrades single-stranded DNA into large acid-insoluble oligonucleotides, which are then degraded further into small acid-soluble oligonucleotides. The chain is Exodeoxyribonuclease 7 small subunit from Pseudomonas fluorescens (strain SBW25).